The sequence spans 288 residues: Acetyl-coenzyme A carboxylase carboxyl transferase subunit beta (288 aa).

A CoA carboxyltransferase N-terminal domain is found at leucine 34–glutamine 288. Cysteine 38, cysteine 41, cysteine 56, and cysteine 59 together coordinate Zn(2+). A C4-type zinc finger spans residues cysteine 38–cysteine 59.

This sequence belongs to the AccD/PCCB family. In terms of assembly, acetyl-CoA carboxylase is a heterohexamer composed of biotin carboxyl carrier protein (AccB), biotin carboxylase (AccC) and two subunits each of ACCase subunit alpha (AccA) and ACCase subunit beta (AccD). Zn(2+) is required as a cofactor.

The protein resides in the cytoplasm. It carries out the reaction N(6)-carboxybiotinyl-L-lysyl-[protein] + acetyl-CoA = N(6)-biotinyl-L-lysyl-[protein] + malonyl-CoA. It participates in lipid metabolism; malonyl-CoA biosynthesis; malonyl-CoA from acetyl-CoA: step 1/1. Functionally, component of the acetyl coenzyme A carboxylase (ACC) complex. Biotin carboxylase (BC) catalyzes the carboxylation of biotin on its carrier protein (BCCP) and then the CO(2) group is transferred by the transcarboxylase to acetyl-CoA to form malonyl-CoA. The polypeptide is Acetyl-coenzyme A carboxylase carboxyl transferase subunit beta (Streptococcus pyogenes serotype M3 (strain ATCC BAA-595 / MGAS315)).